The following is a 248-amino-acid chain: Triosephosphate isomerase (248 aa).

Residue asparagine 9–lysine 11 coordinates substrate. Histidine 94 (electrophile) is an active-site residue. Residue glutamate 166 is the Proton acceptor of the active site. Substrate contacts are provided by residues glycine 172, serine 211, and glycine 232–glycine 233.

Belongs to the triosephosphate isomerase family. Homodimer.

Its subcellular location is the cytoplasm. The catalysed reaction is D-glyceraldehyde 3-phosphate = dihydroxyacetone phosphate. It functions in the pathway carbohydrate biosynthesis; gluconeogenesis. Its pathway is carbohydrate degradation; glycolysis; D-glyceraldehyde 3-phosphate from glycerone phosphate: step 1/1. Involved in the gluconeogenesis. Catalyzes stereospecifically the conversion of dihydroxyacetone phosphate (DHAP) to D-glyceraldehyde-3-phosphate (G3P). The protein is Triosephosphate isomerase of Vesicomyosocius okutanii subsp. Calyptogena okutanii (strain HA).